Consider the following 202-residue polypeptide: Diadenylate cyclase (202 aa).

A helical transmembrane segment spans residues 6 to 26 (VFSVIILVLLFLILALTLLFV). The DAC domain maps to 29 to 185 (NKRTRSFVIR…RGVIKTLSSN (157 aa)).

This sequence belongs to the adenylate cyclase family. DacB/CdaS subfamily. As to quaternary structure, probably oligomerizes.

It is found in the cell membrane. It carries out the reaction 2 ATP = 3',3'-c-di-AMP + 2 diphosphate. Its function is as follows. Catalyzes the condensation of 2 ATP molecules into cyclic di-AMP (c-di-AMP), a second messenger used to regulate differing processes in different bacteria. This is Diadenylate cyclase from Mycoplasma pneumoniae (strain ATCC 29342 / M129 / Subtype 1) (Mycoplasmoides pneumoniae).